A 401-amino-acid chain; its full sequence is Imidazolonepropionase (401 aa).

Residues His-70 and His-72 each contribute to the Fe(3+) site. The Zn(2+) site is built by His-70 and His-72. Residues Arg-79, Tyr-142, and His-175 each contribute to the 4-imidazolone-5-propanoate site. N-formimidoyl-L-glutamate is bound at residue Tyr-142. Position 238 (His-238) interacts with Fe(3+). His-238 serves as a coordination point for Zn(2+). Gln-241 provides a ligand contact to 4-imidazolone-5-propanoate. A Fe(3+)-binding site is contributed by Asp-313. Asp-313 is a Zn(2+) binding site. Asn-315 and Gly-317 together coordinate N-formimidoyl-L-glutamate. Thr-318 serves as a coordination point for 4-imidazolone-5-propanoate.

It belongs to the metallo-dependent hydrolases superfamily. HutI family. Zn(2+) serves as cofactor. Fe(3+) is required as a cofactor.

The protein resides in the cytoplasm. It catalyses the reaction 4-imidazolone-5-propanoate + H2O = N-formimidoyl-L-glutamate. It participates in amino-acid degradation; L-histidine degradation into L-glutamate; N-formimidoyl-L-glutamate from L-histidine: step 3/3. Its function is as follows. Catalyzes the hydrolytic cleavage of the carbon-nitrogen bond in imidazolone-5-propanoate to yield N-formimidoyl-L-glutamate. It is the third step in the universal histidine degradation pathway. The protein is Imidazolonepropionase of Xanthomonas axonopodis pv. citri (strain 306).